Reading from the N-terminus, the 130-residue chain is Protein ApaG (130 aa).

The ApaG domain maps to 3-127 (KAETRGITVT…FSLDSPHLRR (125 aa)).

The chain is Protein ApaG from Methylorubrum populi (strain ATCC BAA-705 / NCIMB 13946 / BJ001) (Methylobacterium populi).